We begin with the raw amino-acid sequence, 169 residues long: S-ribosylhomocysteine lyase (169 aa).

Residues H54, H58, and C128 each coordinate Fe cation.

Belongs to the LuxS family. Homodimer. The cofactor is Fe cation.

The enzyme catalyses S-(5-deoxy-D-ribos-5-yl)-L-homocysteine = (S)-4,5-dihydroxypentane-2,3-dione + L-homocysteine. Its function is as follows. Involved in the synthesis of autoinducer 2 (AI-2) which is secreted by bacteria and is used to communicate both the cell density and the metabolic potential of the environment. The regulation of gene expression in response to changes in cell density is called quorum sensing. Catalyzes the transformation of S-ribosylhomocysteine (RHC) to homocysteine (HC) and 4,5-dihydroxy-2,3-pentadione (DPD). This is S-ribosylhomocysteine lyase from Aeromonas hydrophila subsp. hydrophila (strain ATCC 7966 / DSM 30187 / BCRC 13018 / CCUG 14551 / JCM 1027 / KCTC 2358 / NCIMB 9240 / NCTC 8049).